Reading from the N-terminus, the 188-residue chain is MNGVFLAIGALLPICLAGGALLGYAAVRFRVQGDPVAEQVNALLPQTQCGQCGYPGCKPYAEAIAAGDKINKCPPGGEATIRALADLLDLEPEPLDAAEETPPRVAYIREAECIGCTKCIQACPVDAIVGAARLMHTVIADECTGCDLCLEPCPVDCIEMRETPDDVRHWKWPQPSPRLIASDRERAA.

The segment at 1–26 (MNGVFLAIGALLPICLAGGALLGYAA) is hydrophobic. In terms of domain architecture, 4Fe-4S spans 32 to 90 (QGDPVAEQVNALLPQTQCGQCGYPGCKPYAEAIAAGDKINKCPPGGEATIRALADLLDL). [4Fe-4S] cluster is bound by residues C49, C52, C57, C73, C113, C116, C119, C123, C143, C146, C149, and C153. 4Fe-4S ferredoxin-type domains are found at residues 104–133 (RVAY…GAAR) and 134–163 (LMHT…MRET).

Belongs to the 4Fe4S bacterial-type ferredoxin family. RnfB subfamily. As to quaternary structure, the complex is composed of six subunits: RnfA, RnfB, RnfC, RnfD, RnfE and RnfG. The cofactor is [4Fe-4S] cluster.

The protein resides in the cell inner membrane. Part of a membrane-bound complex that couples electron transfer with translocation of ions across the membrane. This Pseudomonas aeruginosa (strain UCBPP-PA14) protein is Ion-translocating oxidoreductase complex subunit B.